The chain runs to 264 residues: S-adenosylmethionine decarboxylase proenzyme (264 aa).

The Schiff-base intermediate with substrate; via pyruvic acid role is filled by S112. At S112 the chain carries Pyruvic acid (Ser); by autocatalysis. Catalysis depends on H117, which acts as the Proton acceptor; for processing activity. Residue C140 is the Proton donor; for catalytic activity of the active site.

It belongs to the prokaryotic AdoMetDC family. Type 2 subfamily. As to quaternary structure, heterooctamer of four alpha and four beta chains arranged as a tetramer of alpha/beta heterodimers. Requires pyruvate as cofactor. Post-translationally, is synthesized initially as an inactive proenzyme. Formation of the active enzyme involves a self-maturation process in which the active site pyruvoyl group is generated from an internal serine residue via an autocatalytic post-translational modification. Two non-identical subunits are generated from the proenzyme in this reaction, and the pyruvate is formed at the N-terminus of the alpha chain, which is derived from the carboxyl end of the proenzyme. The post-translation cleavage follows an unusual pathway, termed non-hydrolytic serinolysis, in which the side chain hydroxyl group of the serine supplies its oxygen atom to form the C-terminus of the beta chain, while the remainder of the serine residue undergoes an oxidative deamination to produce ammonia and the pyruvoyl group blocking the N-terminus of the alpha chain.

It catalyses the reaction S-adenosyl-L-methionine + H(+) = S-adenosyl 3-(methylsulfanyl)propylamine + CO2. It participates in amine and polyamine biosynthesis; S-adenosylmethioninamine biosynthesis; S-adenosylmethioninamine from S-adenosyl-L-methionine: step 1/1. Functionally, catalyzes the decarboxylation of S-adenosylmethionine to S-adenosylmethioninamine (dcAdoMet), the propylamine donor required for the synthesis of the polyamines spermine and spermidine from the diamine putrescine. The chain is S-adenosylmethionine decarboxylase proenzyme from Shigella boydii serotype 4 (strain Sb227).